Consider the following 262-residue polypeptide: Hemin import ATP-binding protein HmuV (262 aa).

In terms of domain architecture, ABC transporter spans 3-244 (LQARNLTLAR…DHMRRVYGIE (242 aa)). 35–42 (GANGAGKS) contributes to the ATP binding site.

It belongs to the ABC transporter superfamily. Heme (hemin) importer (TC 3.A.1.14.5) family. As to quaternary structure, the complex is composed of two ATP-binding proteins (HmuV), two transmembrane proteins (HmuU) and a solute-binding protein (HmuT).

It is found in the cell inner membrane. In terms of biological role, part of the ABC transporter complex HmuTUV involved in hemin import. Responsible for energy coupling to the transport system. This chain is Hemin import ATP-binding protein HmuV, found in Bordetella bronchiseptica (strain ATCC BAA-588 / NCTC 13252 / RB50) (Alcaligenes bronchisepticus).